The primary structure comprises 216 residues: Pyridoxine/pyridoxamine 5'-phosphate oxidase (216 aa).

Residues arginine 65–lysine 70, tyrosine 80–threonine 81, arginine 86, lysine 87, and glutamine 109 contribute to the FMN site. Lysine 70 lines the substrate pocket. Substrate contacts are provided by tyrosine 127, arginine 131, and serine 135. FMN is bound by residues glutamine 144–serine 145 and tryptophan 189. Substrate is bound at residue arginine 195–histidine 197. FMN is bound at residue arginine 199.

This sequence belongs to the pyridoxamine 5'-phosphate oxidase family. Homodimer. The cofactor is FMN.

It carries out the reaction pyridoxamine 5'-phosphate + O2 + H2O = pyridoxal 5'-phosphate + H2O2 + NH4(+). The enzyme catalyses pyridoxine 5'-phosphate + O2 = pyridoxal 5'-phosphate + H2O2. It functions in the pathway cofactor metabolism; pyridoxal 5'-phosphate salvage; pyridoxal 5'-phosphate from pyridoxamine 5'-phosphate: step 1/1. Its pathway is cofactor metabolism; pyridoxal 5'-phosphate salvage; pyridoxal 5'-phosphate from pyridoxine 5'-phosphate: step 1/1. In terms of biological role, catalyzes the oxidation of either pyridoxine 5'-phosphate (PNP) or pyridoxamine 5'-phosphate (PMP) into pyridoxal 5'-phosphate (PLP). This Sphingopyxis alaskensis (strain DSM 13593 / LMG 18877 / RB2256) (Sphingomonas alaskensis) protein is Pyridoxine/pyridoxamine 5'-phosphate oxidase.